The sequence spans 167 residues: Photosystem I assembly protein Ycf3 (167 aa).

3 TPR repeats span residues 35-68, 72-105, and 120-153; these read AFTY…EIDP, SYIL…NPSL, and GEQA…APGN.

Belongs to the Ycf3 family.

The protein resides in the plastid. Its subcellular location is the chloroplast thylakoid membrane. In terms of biological role, essential for the assembly of the photosystem I (PSI) complex. May act as a chaperone-like factor to guide the assembly of the PSI subunits. The polypeptide is Photosystem I assembly protein Ycf3 (Chara vulgaris (Common stonewort)).